A 659-amino-acid polypeptide reads, in one-letter code: uncharacterized protein (659 aa).

The next 16 helical transmembrane spans lie at 24–44 (TTLM…YGLF), 71–91 (FGAS…VMMV), 115–135 (IGWL…DSGV), 157–177 (RAWI…RVII), 183–203 (FVLL…GNAG), 214–234 (AVIV…TAAL), 242–262 (AVLI…AELV), 279–299 (LGLV…WALV), 311–331 (LTAL…VQTA), 365–385 (FDSL…AGFV), 393–413 (TWPV…VFTS), 433–453 (MTLN…TLAL), 490–510 (FILF…DTLV), 517–537 (EFMA…IIGI), 550–570 (IGLL…LMTM), and 596–616 (IGGA…IVAL).

It to M.tuberculosis Rv0102.

It localises to the cell membrane. This is an uncharacterized protein from Mycobacterium leprae (strain TN).